The following is a 253-amino-acid chain: Cyclin-C1-1 (253 aa).

It belongs to the cyclin family. Cyclin C subfamily.

The chain is Cyclin-C1-1 (CYCC1-1) from Arabidopsis thaliana (Mouse-ear cress).